A 349-amino-acid chain; its full sequence is Twinfilin-2-A (349 aa).

ADF-H domains are found at residues 4–139 (QTGI…KHVS) and 177–313 (GLSF…DEVH). Positions 321-349 (QAFAKPKGPAGKRGQKRLIKGPGENGEDS) are disordered.

It belongs to the actin-binding proteins ADF family. Twinfilin subfamily. As to quaternary structure, interacts with G-actin; ADP-actin form and capping protein (CP).

It is found in the cytoplasm. Its subcellular location is the cytoskeleton. The protein localises to the perinuclear region. Functionally, actin-binding protein involved in motile and morphological processes. Inhibits actin polymerization, likely by sequestering G-actin. This Xenopus laevis (African clawed frog) protein is Twinfilin-2-A (twf2-a).